A 657-amino-acid polypeptide reads, in one-letter code: UvrABC system protein B (657 aa).

Residues 25–182 (KSIKKGNEFQ…KKLIEIQYER (158 aa)) enclose the Helicase ATP-binding domain. 38-45 (GVTGSGKT) is an ATP binding site. Positions 91-114 (YYDYYQPEAYVPQTDTFIEKDASI) match the Beta-hairpin motif. Positions 429–595 (QIDDLYTEIQ…TINKEVRDLI (167 aa)) constitute a Helicase C-terminal domain. Residues 621-656 (KKLIKEYTEEMMLAAKNLQFERAAQLRDEIEELKGK) enclose the UVR domain.

It belongs to the UvrB family. In terms of assembly, forms a heterotetramer with UvrA during the search for lesions. Interacts with UvrC in an incision complex.

It localises to the cytoplasm. The UvrABC repair system catalyzes the recognition and processing of DNA lesions. A damage recognition complex composed of 2 UvrA and 2 UvrB subunits scans DNA for abnormalities. Upon binding of the UvrA(2)B(2) complex to a putative damaged site, the DNA wraps around one UvrB monomer. DNA wrap is dependent on ATP binding by UvrB and probably causes local melting of the DNA helix, facilitating insertion of UvrB beta-hairpin between the DNA strands. Then UvrB probes one DNA strand for the presence of a lesion. If a lesion is found the UvrA subunits dissociate and the UvrB-DNA preincision complex is formed. This complex is subsequently bound by UvrC and the second UvrB is released. If no lesion is found, the DNA wraps around the other UvrB subunit that will check the other stand for damage. This chain is UvrABC system protein B, found in Clostridium botulinum (strain Alaska E43 / Type E3).